The following is a 50-amino-acid chain: Photosystem II reaction center protein M (50 aa).

Residues 7–27 (GFVASLLFVGIPTIFLIGLFI) traverse the membrane as a helical segment.

Belongs to the PsbM family. In terms of assembly, PSII is composed of 1 copy each of membrane proteins PsbA, PsbB, PsbC, PsbD, PsbE, PsbF, PsbH, PsbI, PsbJ, PsbK, PsbL, PsbM, PsbT, PsbX, PsbY, Psb30/Ycf12, peripheral proteins PsbO, CyanoQ (PsbQ), PsbU, PsbV and a large number of cofactors. It forms dimeric complexes.

The protein resides in the cellular thylakoid membrane. One of the components of the core complex of photosystem II (PSII). PSII is a light-driven water:plastoquinone oxidoreductase that uses light energy to abstract electrons from H(2)O, generating O(2) and a proton gradient subsequently used for ATP formation. It consists of a core antenna complex that captures photons, and an electron transfer chain that converts photonic excitation into a charge separation. This subunit is found at the monomer-monomer interface. This chain is Photosystem II reaction center protein M, found in Prochlorococcus marinus subsp. pastoris (strain CCMP1986 / NIES-2087 / MED4).